Here is a 7079-residue protein sequence, read N- to C-terminus: Replicase polyprotein 1ab (7079 aa).

Positions Thr-12–Gly-127 constitute a CoV Nsp1 globular domain. Residues Glu-148–Gly-179 enclose the BetaCoV Nsp1 C-terminal domain. The CoV Nsp2 N-terminal domain maps to Thr-183–Arg-456. Zn(2+)-binding residues include Cys-200, Cys-231, His-234, His-236, Cys-323, Cys-326, Cys-341, Cys-344, Cys-370, Cys-373, His-382, and Cys-416. Residues Cys-200–His-236 form a C2H2 region. The segment at Cys-323–Cys-344 is C4. The interval Cys-370–Cys-416 is C2HC. The CoV Nsp2 middle domain occupies Arg-458 to Met-688. One can recognise a CoV Nsp2 C-terminal domain in the interval Ile-690–Gly-818. One can recognise a Ubiquitin-like 1 domain in the interval Lys-822–Glu-930. Macro domains lie at Val-1001–Leu-1167, Lys-1213–Lys-1341, and Ile-1349–Ser-1476. The DPUP domain maps to Thr-1478–Ser-1544. Positions Val-1548 to Val-1603 constitute a Ubiquitin-like 2 domain. The region spanning Tyr-1617–Glu-1881 is the Peptidase C16 domain. The For PL-PRO activity role is filled by Cys-1657. Positions 1735, 1738, 1770, and 1772 each coordinate Zn(2+). The C4-type zinc-finger motif lies at Cys-1735 to Cys-1772. Catalysis depends on for PL-PRO activity residues His-1818 and Asp-1832. In terms of domain architecture, Nucleic acid-binding spans Pro-1894–Thr-2004. The 110-residue stretch at Pro-2029–Asn-2138 folds into the G2M domain. The interval Leu-2098–Trp-2377 is HD1. The helical transmembrane segment at Leu-2209–Val-2229 threads the bilayer. Residues Thr-2230–Asp-2300 form the 3Ecto domain. 2 cysteine pairs are disulfide-bonded: Cys-2246-Cys-2274 and Cys-2265-Cys-2271. A run of 2 helical transmembrane segments spans residues Trp-2310–Met-2330 and Met-2357–Trp-2377. Positions Lys-2378–Asp-2468 are Y1. Positions Lys-2378–Gly-2746 constitute a CoV Nsp3 Y domain. Positions 2382, 2387, 2392, 2395, 2428, 2431, 2435, and 2438 each coordinate Zn(2+). A ZF1 region spans residues His-2382–Cys-2395. A ZF2 region spans residues Cys-2428–Cys-2438. Residues Gln-2469–Val-2563 are Y2. Positions Gln-2469–Gly-2746 are coV-Y. Positions Gly-2564–Asp-2645 are Y3. The segment at Leu-2646 to Gly-2746 is Y4. 7 helical membrane passes run Leu-2761–Val-2781, Pro-2998–Val-3018, Ala-3028–Met-3048, Val-3060–Ala-3080, Phe-3083–Val-3103, Trp-3111–Ile-3131, and Val-3148–Leu-3168. The tract at residues Leu-2761 to Leu-3168 is HD2. One can recognise a Nsp4C domain in the interval Val-3148–Gln-3246. Residues Ser-3247–Gln-3552 enclose the Peptidase C30 domain. Active-site for 3CL-PRO activity residues include His-3287 and Cys-3391. A run of 7 helical transmembrane segments spans residues Phe-3570–Tyr-3590, Asn-3592–Val-3612, Phe-3618–Met-3638, Cys-3665–Tyr-3684, Val-3691–Leu-3710, Ile-3734–Ile-3754, and Ile-3762–Leu-3782. The interval Phe-3570–Leu-3782 is HD3. In terms of domain architecture, RdRp Nsp7 cofactor spans Ser-3843 to Gln-3925. In terms of domain architecture, RdRp Nsp8 cofactor spans Ala-3926–Gln-4123. In terms of domain architecture, Nsp9 ssRNA-binding spans Asn-4124 to Gln-4236. Residues Ala-4237–Gln-4375 form the ExoN/MTase coactivator domain. Positions 4310, 4313, 4319, 4326, 4353, 4356, 4364, and 4366 each coordinate Zn(2+). 2 zinc fingers span residues Cys-4310–Cys-4326 and Cys-4353–Cys-4366. Residues Phe-4382–Leu-4636 form the NiRAN domain. The Mn(2+) site is built by Asn-4584 and Asp-4593. The Nsp12 Interface domain occupies Ile-4641–Ser-4739. Zn(2+) is bound by residues His-4670, Cys-4676, Cys-4681, Cys-4685, and Cys-4862. In terms of domain architecture, Nsp12 RNA-dependent RNA polymerase spans Arg-4740 to Gln-5307. The rdRp Fingers N-ter stretch occupies residues Ser-4742–Ala-4956. Residues Thr-4957–Pro-4995 form a rdRp Palm N-ter region. In terms of domain architecture, RdRp catalytic spans Pro-4987–Gly-5149. The segment at Lys-4996–Gly-5054 is rdRp Fingers C-ter. Residues His-5017, Cys-5020, and Cys-5021 each contribute to the Zn(2+) site. The tract at residues Thr-5055 to Gln-5190 is rdRp Palm C-ter. Active-site residues include Ser-5134, Asp-5135, and Asp-5136. The tract at residues His-5191–Gln-5307 is rdRp Thumb. In terms of domain architecture, CV ZBD spans Ala-5308–Asp-5420. Cys-5312, Cys-5315, Cys-5323, Cys-5326, Cys-5333, Cys-5336, His-5340, His-5346, Cys-5357, Cys-5362, Cys-5379, and His-5382 together coordinate Zn(2+). Residues Asn-5564 to Leu-5745 enclose the (+)RNA virus helicase ATP-binding domain. Gly-5589–Ser-5596 contributes to the ATP binding site. The 170-residue stretch at Gly-5746–Leu-5915 folds into the (+)RNA virus helicase C-terminal domain. An ExoN domain is found at Met-5980 to Val-6195. Residues Asp-5998, Glu-6000, and Glu-6099 contribute to the active site. Positions 6115, 6118, 6134, 6137, 6165, 6169, and 6172 each coordinate Zn(2+). Active-site residues include His-6176 and Asp-6181. Residue Cys-6187 participates in Zn(2+) binding. An N7-MTase domain is found at Tyr-6204–Gln-6435. S-adenosyl-L-methionine is bound at residue Asp-6239–Ala-6245. The interval Cys-6322–Thr-6336 is gpppA-binding. Zn(2+)-binding residues include Cys-6360, Cys-6381, Cys-6392, and His-6395. Positions Ser-6436–Arg-6496 constitute a Nsp15 N-terminal oligomerization domain. Residues Asn-6497–Gln-6622 enclose the AV-Nsp11N/CoV-Nsp15M domain. The region spanning Lys-6639 to Pro-6778 is the NendoU domain. Catalysis depends on residues His-6669, His-6684, Lys-6724, Lys-6827, Asp-6911, Lys-6951, and Glu-6984. Residues Ser-6783–Val-7077 form the Nidovirus-type SAM-dependent 2'-O-MTase domain.

The protein belongs to the coronaviruses polyprotein 1ab family. As to quaternary structure, interacts with host PHB and PHB2. Interacts with papain-like protease nsp3 and non-structural protein 6. In terms of assembly, monomer. Homodimer. Only the homodimer shows catalytic activity. As to quaternary structure, interacts with nsp8 and nsp12 to form the replication-transcription complex (RTC): nsp12, nsp7, two subunits of nsp8, and up to two subunits of nsp13. Interacts with nsp7, nsp13 and nsp12 to form the replication-transcription complex (RTC): nsp12, nsp7, two subunits of nsp8, and up to two subunits of nsp13. In terms of assembly, interacts with nsp12. As to quaternary structure, interacts with proofreading exoribonuclease nsp14 and 2'-O-methyltransferase nsp16; these interactions enhance nsp14 and nsp16 enzymatic activities. Interacts with nsp7 and nsp8 to form the replication-transcription complex (RTC): nsp12, nsp7, two subunits of nsp8, and up to two subunits of nsp13. Interacts with nsp9. In terms of assembly, interacts with nsp8 to form the replication-transcription complex (RTC): nsp12, nsp7, two subunits of nsp8, and up to two subunits of nsp13. Requires Mn(2+) as cofactor. Mg(2+) is required as a cofactor. In terms of processing, specific enzymatic cleavages in vivo by its own proteases yield mature proteins. 3CL-PRO and PL-PRO proteinases are autocatalytically processed.

The protein localises to the host membrane. The protein resides in the host cytoplasm. It localises to the host perinuclear region. Its subcellular location is the host endoplasmic reticulum-Golgi intermediate compartment. The enzyme catalyses RNA(n) + a ribonucleoside 5'-triphosphate = RNA(n+1) + diphosphate. The catalysed reaction is ATP + H2O = ADP + phosphate + H(+). It carries out the reaction Thiol-dependent hydrolysis of ester, thioester, amide, peptide and isopeptide bonds formed by the C-terminal Gly of ubiquitin (a 76-residue protein attached to proteins as an intracellular targeting signal).. It catalyses the reaction a 5'-end (N(7)-methyl 5'-triphosphoguanosine)-ribonucleoside in mRNA + S-adenosyl-L-methionine = a 5'-end (N(7)-methyl 5'-triphosphoguanosine)-(2'-O-methyl-ribonucleoside) in mRNA + S-adenosyl-L-homocysteine + H(+). The enzyme catalyses uridylyl-uridylyl-ribonucleotide-RNA = a 3'-end uridylyl-2',3'-cyclophospho-uridine-RNA + a 5'-end dephospho-ribonucleoside-RNA. The catalysed reaction is a 5'-end diphospho-ribonucleoside in mRNA + GTP + H(+) = a 5'-end (5'-triphosphoguanosine)-ribonucleoside in mRNA + diphosphate. It carries out the reaction a 5'-end (5'-triphosphoguanosine)-ribonucleoside in mRNA + S-adenosyl-L-methionine = a 5'-end (N(7)-methyl 5'-triphosphoguanosine)-ribonucleoside in mRNA + S-adenosyl-L-homocysteine. Functionally, the replicase polyprotein of coronaviruses is a multifunctional protein: it contains the activities necessary for the transcription of negative stranded RNA, leader RNA, subgenomic mRNAs and progeny virion RNA as well as proteinases responsible for the cleavage of the polyprotein into functional products. Inhibits host translation by interacting with the 40S ribosomal subunit. The nsp1-40S ribosome complex further induces an endonucleolytic cleavage near the 5'UTR of host mRNAs, targeting them for degradation. Viral mRNAs are not susceptible to nsp1-mediated endonucleolytic RNA cleavage thanks to the presence of a 5'-end leader sequence and are therefore protected from degradation. By suppressing host gene expression, nsp1 facilitates efficient viral gene expression in infected cells and evasion from host immune response. In terms of biological role, may play a role in the modulation of host cell survival signaling pathway by interacting with host PHB and PHB2. Indeed, these two proteins play a role in maintaining the functional integrity of the mitochondria and protecting cells from various stresses. Its function is as follows. Responsible for the cleavages located at the N-terminus of the replicase polyprotein. In addition, PL-PRO possesses a deubiquitinating/deISGylating activity and processes both 'Lys-48'- and 'Lys-63'-linked polyubiquitin chains from cellular substrates. Participates together with nsp4 in the assembly of virally-induced cytoplasmic double-membrane vesicles necessary for viral replication. Antagonizes innate immune induction of type I interferon by blocking the phosphorylation, dimerization and subsequent nuclear translocation of host IRF3. Also prevents host NF-kappa-B signaling. Functionally, participates in the assembly of virally-induced cytoplasmic double-membrane vesicles necessary for viral replication. Cleaves the C-terminus of replicase polyprotein at 11 sites. Recognizes substrates containing the core sequence [ILMVF]-Q-|-[SGACN]. Also able to bind an ADP-ribose-1''-phosphate (ADRP). In terms of biological role, plays a role in the initial induction of autophagosomes from host endoplasmic reticulum. Later, limits the expansion of these phagosomes that are no longer able to deliver viral components to lysosomes. Its function is as follows. Forms a hexadecamer with nsp8 (8 subunits of each) that may participate in viral replication by acting as a primase. Alternatively, may synthesize substantially longer products than oligonucleotide primers. Functionally, forms a hexadecamer with nsp7 (8 subunits of each) that may participate in viral replication by acting as a primase. Alternatively, may synthesize substantially longer products than oligonucleotide primers. Forms a primer, NSP9-pU, which is utilized by the polymerase for the initiation of RNA chains. Interacts with ribosome signal recognition particle RNA (SRP). Together with NSP8, suppress protein integration into the cell membrane, thereby disrupting host immune defenses. In terms of biological role, plays a pivotal role in viral transcription by stimulating both nsp14 3'-5' exoribonuclease and nsp16 2'-O-methyltransferase activities. Therefore plays an essential role in viral mRNAs cap methylation. Its function is as follows. RNA-directed RNA polymerase that catalyzes the transcription of viral genomic and subgenomic RNAs. Acts in complex with nsp7 and nsp8 to transcribe both the minus and positive strands of genomic RNA. The kinase-like NiRAN domain of NSP12 attaches one or more nucleotides to the amino terminus of NSP9, forming a covalent RNA-protein intermediate that serves as transcription/replication primer. Subgenomic RNAs (sgRNAs) are formed by discontinuous transcription: The polymerase has the ability to pause at transcription-regulating sequences (TRS) and jump to the leader TRS, resulting in a major deletion. This creates a series of subgenomic RNAs that are replicated, transcribed and translated. In addition, Nsp12 is a subunit of the viral RNA capping enzyme that catalyzes the RNA guanylyltransferase reaction for genomic and sub-genomic RNAs. Subsequently, the NiRAN domain transfers RNA to GDP, and forms the core cap structure GpppA-RNA. Functionally, multi-functional protein with a zinc-binding domain in N-terminus displaying RNA and DNA duplex-unwinding activities with 5' to 3' polarity. Activity of helicase is dependent on magnesium. Plays a role in viral RNA synthesis through two distinct activities. The N7-guanine methyltransferase activity plays a role in the formation of the cap structure GpppA-RNA. The proofreading exoribonuclease reduces the sensitivity of the virus to RNA mutagens during replication. This activity acts on both ssRNA and dsRNA in a 3'-5' direction. In terms of biological role, plays a role in viral transcription/replication and prevents the simultaneous activation of host cell dsRNA sensors, such as MDA5/IFIH1, OAS, and PKR. Acts by degrading the 5'-polyuridines generated during replication of the poly(A) region of viral genomic and subgenomic RNAs. Catalyzes a two-step reaction in which a 2'3'-cyclic phosphate (2'3'-cP) is first generated by 2'-O transesterification, which is then hydrolyzed to a 3'-phosphate (3'-P). If not degraded, poly(U) RNA would hybridize with poly(A) RNA tails and activate host dsRNA sensors. Its function is as follows. Methyltransferase that mediates mRNA cap 2'-O-ribose methylation to the 5'-cap structure of viral mRNAs. N7-methyl guanosine cap is a prerequisite for binding of nsp16. Therefore plays an essential role in viral mRNAs cap methylation which is essential to evade immune system. The protein is Replicase polyprotein 1ab (rep) of Bat coronavirus 279/2005 (BtCoV).